The sequence spans 721 residues: DNA ligase (721 aa).

Residues 42–46 (DAEYD), 91–92 (SL), and Glu125 contribute to the NAD(+) site. The active-site N6-AMP-lysine intermediate is the Lys127. The NAD(+) site is built by Arg148, Glu184, Lys300, and Lys324. 4 residues coordinate Zn(2+): Cys430, Cys433, Cys448, and Cys454. The 80-residue stretch at 642–721 (STGSPVEGKT…DAWFTLVGEE (80 aa)) folds into the BRCT domain.

The protein belongs to the NAD-dependent DNA ligase family. LigA subfamily. Requires Mg(2+) as cofactor. Mn(2+) is required as a cofactor.

The catalysed reaction is NAD(+) + (deoxyribonucleotide)n-3'-hydroxyl + 5'-phospho-(deoxyribonucleotide)m = (deoxyribonucleotide)n+m + AMP + beta-nicotinamide D-nucleotide.. Its function is as follows. DNA ligase that catalyzes the formation of phosphodiester linkages between 5'-phosphoryl and 3'-hydroxyl groups in double-stranded DNA using NAD as a coenzyme and as the energy source for the reaction. It is essential for DNA replication and repair of damaged DNA. This chain is DNA ligase, found in Brucella anthropi (strain ATCC 49188 / DSM 6882 / CCUG 24695 / JCM 21032 / LMG 3331 / NBRC 15819 / NCTC 12168 / Alc 37) (Ochrobactrum anthropi).